We begin with the raw amino-acid sequence, 325 residues long: Probable arylamine N-acetyltransferase 1 (325 aa).

Cysteine 72 (acyl-thioester intermediate) is an active-site residue. Active-site residues include histidine 112 and aspartate 127.

It belongs to the arylamine N-acetyltransferase family.

It catalyses the reaction an arylamine + acetyl-CoA = an N-acetylarylamine + CoA. The protein is Probable arylamine N-acetyltransferase 1 of Dictyostelium discoideum (Social amoeba).